We begin with the raw amino-acid sequence, 151 residues long: Large ribosomal subunit protein bL9 (151 aa).

Belongs to the bacterial ribosomal protein bL9 family.

Its function is as follows. Binds to the 23S rRNA. The protein is Large ribosomal subunit protein bL9 of Carboxydothermus hydrogenoformans (strain ATCC BAA-161 / DSM 6008 / Z-2901).